A 256-amino-acid polypeptide reads, in one-letter code: Alcohol dehydrogenase (256 aa).

Position 2 is an N-acetylserine (serine 2). NAD(+)-binding positions include 12 to 41 (FVAGLGGIGLDTSKELLKRDLKNLVILDRI) and aspartate 65. Serine 140 lines the substrate pocket. Residue tyrosine 153 is the Proton acceptor of the active site. Lysine 157 contacts NAD(+).

Belongs to the short-chain dehydrogenases/reductases (SDR) family. As to quaternary structure, homodimer.

The enzyme catalyses a primary alcohol + NAD(+) = an aldehyde + NADH + H(+). It carries out the reaction a secondary alcohol + NAD(+) = a ketone + NADH + H(+). With respect to regulation, inhibited by 2,2,2-trifluoroethanol and pyrazole. This chain is Alcohol dehydrogenase (Adh), found in Drosophila melanogaster (Fruit fly).